Consider the following 536-residue polypeptide: Keratin, type II cytoskeletal 4 (536 aa).

A head region spans residues 1–145 (MISRQSSVRG…DPEIQKIRTA (145 aa)). An Omega-N-methylarginine modification is found at arginine 13. The tract at residues 146-181 (EREQIKTLNNKFASFIDKVRFLEQQNKVLETKWNLL) is coil 1A. The IF rod domain maps to 146-457 (EREQIKTLNN…KLLEGEECRM (312 aa)). The interval 182 to 200 (QQQTTTTSPRNLDPFFETY) is linker 1. Positions 201–293 (INALRKNLDT…LYEAELSQMQ (93 aa)) are coil 1B. The interval 294–316 (THVSDTSVVLSMDNNRNLDLDGI) is linker 12. Residues 317 to 454 (IAEVRAQYEE…TYRKLLEGEE (138 aa)) form a coil 2 region. The tract at residues 455–524 (CRMSGECKSA…TSSATITKRS (70 aa)) is tail. Residues 515-536 (TSSATITKRSPRTRQDPDGLQP) are disordered. Over residues 527–536 (TRQDPDGLQP) the composition is skewed to basic and acidic residues.

The protein belongs to the intermediate filament family. Heterotetramer of two type I and two type II keratins. keratin-4 is generally associated with keratin-13.

In Rattus norvegicus (Rat), this protein is Keratin, type II cytoskeletal 4.